The following is a 1212-amino-acid chain: Myosin-1 (1212 aa).

A disordered region spans residues 1 to 35 (MGITRRGKDKAAAGQAVAGGASGGRARPKKATFET). Positions 41 to 715 (VGVSDLTLLS…TLFALEHMRD (675 aa)) constitute a Myosin motor domain. ATP is bound at residue 134–141 (GESGAGKT). The actin-binding stretch occupies residues 405–487 (SVGILDIYGF…PGVFSALKDA (83 aa)). IQ domains are found at residues 719-739 (HNMA…RAES) and 740-765 (ATRI…HGHR). In terms of domain architecture, TH1 spans 773–962 (RRRMSILGSR…AVHTQQGEPP (190 aa)). Disordered regions lie at residues 947-1064 (DFYK…APPA) and 1115-1212 (PAAY…DDDW). Residues 954–966 (VHTQQGEPPNSVS) show a composition bias toward polar residues. Low complexity-rich tracts occupy residues 987–998 (RPGGPNGRPARG) and 1008–1052 (PGGA…ASVR). Over residues 1053 to 1062 (APPPPPPAAP) the composition is skewed to pro residues. The region spanning 1065-1124 (KAKIMAKVLYDFAGQKENEMSIKEGDLIEIVQKENNGWWLAKSGNQQAWVPAAYVEEQKQ) is the SH3 domain. Residues 1125-1140 (APPPVAASRPPPPAPP) are compositionally biased toward pro residues. The segment covering 1171–1190 (MSLNGSDGSRSNTPTPSLGN) has biased composition (polar residues).

It belongs to the TRAFAC class myosin-kinesin ATPase superfamily. Myosin family.

The protein localises to the cytoplasm. Its subcellular location is the cytoskeleton. The protein resides in the actin patch. In terms of biological role, type-I myosin implicated in the organization of the actin cytoskeleton. Required for proper actin cytoskeleton polarization. At the cell cortex, assembles in patch-like structures together with proteins from the actin-polymerizing machinery and promotes actin assembly. Functions as actin nucleation-promoting factor (NPF) for the Arp2/3 complex. This is Myosin-1 (MYO1) from Pyricularia oryzae (strain 70-15 / ATCC MYA-4617 / FGSC 8958) (Rice blast fungus).